A 491-amino-acid chain; its full sequence is CTD small phosphatase-like protein 1 (491 aa).

Disordered stretches follow at residues 1-53, 140-198, 221-249, and 261-282; these read MTYA…SLDY, KLTK…TARR, KIQS…TGPP, and TVTG…DGVT. Pro residues predominate over residues 17–26; the sequence is VPPPRTPVGP. A compositionally biased stretch (polar residues) spans 37–49; that stretch reads SASQPLQPKNGAN. Over residues 141 to 156 the composition is skewed to basic and acidic residues; it reads LTKDEKNGGKMNRDGG. A compositionally biased stretch (polar residues) spans 176–187; the sequence is ASTPLNSFSANA. A compositionally biased stretch (low complexity) spans 223–237; sequence QSSQRTNSTNNNHQN. Composition is skewed to polar residues over residues 238–249 and 264–276; these read GRPSTPTNTGPP and GLPT…QQNG. The FCP1 homology domain occupies 307 to 465; that stretch reads QDSNKKCLVI…LDILPSLEHL (159 aa). Asp317 functions as the 4-aspartylphosphate intermediate in the catalytic mechanism. The Mg(2+) site is built by Asp317, Asp319, and Asn428. The active-site Proton donor is the Asp319.

As to quaternary structure, may interact (via phosphatase domain) with cpna-1. Isoform a and isoform b may interact with lim-9 (via LIM zinc-binding domain). Isoform a and isoform b may interact (via FCP1 homology domain) with unc-89 (via fibronectin type-III domain 1, Ig-like C2-type domain 48/49 and protein kinase domain 1 or Ig-like C2-type domain 50, fibronectin type-III domain 2 and protein kinase domain 2); the interaction may act as a molecular bridge to bring two unc-89 molecules together or to stabilize a loop between the 2 protein kinase domains. Requires Mg(2+) as cofactor. Expressed in pharyngeal, vulval and body wall muscles.

The protein localises to the cytoplasm. It is found in the myofibril. It localises to the sarcomere. Its subcellular location is the m line. The enzyme catalyses O-phospho-L-seryl-[protein] + H2O = L-seryl-[protein] + phosphate. The catalysed reaction is O-phospho-L-threonyl-[protein] + H2O = L-threonyl-[protein] + phosphate. With respect to regulation, inhibited by beryllium trifluoride (BeF(3-)) and tetrafluoroaluminate (AlF(4-)) but not by sodium fluoride (NaF) or sodium orthovanadate (Na3VO4). Phosphatase which may play a role in the egg laying muscles. This chain is CTD small phosphatase-like protein 1, found in Caenorhabditis elegans.